A 1368-amino-acid chain; its full sequence is DNA-directed RNA polymerase subunit beta (1368 aa).

The protein belongs to the RNA polymerase beta chain family. In terms of assembly, the RNAP catalytic core consists of 2 alpha, 1 beta, 1 beta' and 1 omega subunit. When a sigma factor is associated with the core the holoenzyme is formed, which can initiate transcription.

It carries out the reaction RNA(n) + a ribonucleoside 5'-triphosphate = RNA(n+1) + diphosphate. Its function is as follows. DNA-dependent RNA polymerase catalyzes the transcription of DNA into RNA using the four ribonucleoside triphosphates as substrates. The protein is DNA-directed RNA polymerase subunit beta of Burkholderia cenocepacia (strain HI2424).